A 1097-amino-acid polypeptide reads, in one-letter code: MSRLKAASELALLVIILQLLQWPGSEASFGRDACSEMSIDGLCQCAPIMSEYEIICPANAENPTFRLTIQPKDYVQIMCNLTDTTDYQQLPKKLRIGEVDRVQMRRCMLPGHTPIASILDYLGIVSPTTLIFESDNLGMNITRQHLDRLHGLKRFRFTTRRLTHIPANLLTDMRNLSHLELRANIEEMPSHLFDDLENLESIEFGSNKLRQMPRGIFGKMPKLKQLNLWSNQLHNLTKHDFEGATSVLGIDIHDNGIEQLPHDVFAHLTNVTDINLSANLFRSLPQGLFDHNKHLNEVRLMNNRVPLATLPSRLFANQPELQILRLRAELQSLPGDLFEHSTQITNISLGDNLLKTLPATLLEHQVNLLSLDLSNNRLTHLPDSLFAHTTNLTDLRLEDNLLTGISGDIFSNLGNLVTLVMSRNRLRTIDSRAFVSTNGLRHLHLDHNDIDLQQPLLDIMLQTQINSPFGYMHGLLTLNLRNNSIIFVYNDWKNTMLQLRELDLSYNNISSLGYEDLAFLSQNRLHVNMTHNKIRRIALPEDVHLGEGYNNNLVHVDLNDNPLVCDCTILWFIQLVRGVHKPQYSRQFKLRTDRLVCSQPNVLEGTPVRQIEPQTLICPLDFSDDPRERKCPRGCNCHVRTYDKALVINCHSGNLTHVPRLPNLHKNMQLMELHLENNTLLRLPSANTPGYESVTSLHLAGNNLTSIDVDQLPTNLTHLDISWNHLQMLNATVLGFLNRTMKWRSVKLSGNPWMCDCTAKPLLLFTQDNFERIGDRNEMMCVNAEMPTRMVELSTNDICPAEKGVFIALAVVIALTGLLAGFTAALYYKFQTEIKIWLYAHNLLLWFVTEEDLDKDKKFDAFISYSHKDQSFIEDYLVPQLEHGPQKFQLCVHERDWLVGGHIPENIMRSVADSRRTIIVLSQNFIKSEWARLEFRAAHRSALNEGRSRIIVIIYSDIGDVEKLDEELKAYLKMNTYLKWGDPWFWDKLRFALPHRRPVGNIGNGALIKTALKGSTDDKLELIKPSPVTPPLTTPPAEATKNPLVAQLNGVTPHQAIMIANGKNGLTNLYTPNGKSHGNGHINGAFIINTNAKQSDV.

The signal sequence occupies residues 1-27 (MSRLKAASELALLVIILQLLQWPGSEA). Over 28 to 807 (SFGRDACSEM…ICPAEKGVFI (780 aa)) the chain is Extracellular. 3 cysteine pairs are disulfide-bonded: Cys34–Cys45, Cys43–Cys56, and Cys79–Cys107. N-linked (GlcNAc...) asparagine glycans are attached at residues Asn80, Asn140, and Asn175. 15 LRR repeats span residues 175–195 (NLSH…LFDD), 198–219 (NLES…IFGK), 222–243 (KLKQ…DFEG), 246–267 (SVLG…VFAH), 270–291 (NVTD…LFDH), 294–314 (HLNE…PSRL), 320–340 (ELQI…LFEH), 343–364 (QITN…LLEH), 367–388 (NLLS…LFAH), 391–412 (NLTD…IFSN), 415–436 (NLVT…AFVS), 439–460 (GLRH…LDIM), 474–495 (GLLT…WKNT), 498–521 (QLRE…AFLS), and 523–544 (NRLH…EDVH). An N-linked (GlcNAc...) asparagine glycan is attached at Asn235. N-linked (GlcNAc...) asparagine glycosylation is found at Asn270 and Asn275. An N-linked (GlcNAc...) asparagine glycan is attached at Asn346. N-linked (GlcNAc...) asparagine glycosylation occurs at Asn391. N-linked (GlcNAc...) asparagine glycans are attached at residues Asn482, Asn508, and Asn528. In terms of domain architecture, LRRCT 1 spans 561-620 (NPLVCDCTILWFIQLVRGVHKPQYSRQFKLRTDRLVCSQPNVLEGTPVRQIEPQTLICPL). Intrachain disulfides connect Cys565–Cys597, Cys567–Cys618, Cys631–Cys637, and Cys635–Cys650. In terms of domain architecture, LRRNT spans 622–663 (FSDDPRERKCPRGCNCHVRTYDKALVINCHSGNLTHVPRLPN). N-linked (GlcNAc...) asparagine glycosylation is found at Asn654, Asn677, Asn703, Asn715, Asn730, and Asn738. LRR repeat units lie at residues 669–690 (QLME…NTPG), 693–713 (SVTS…DQLP), and 715–738 (NLTH…GFLN). Positions 751 to 801 (NPWMCDCTAKPLLLFTQDNFERIGDRNEMMCVNAEMPTRMVELSTNDICPA) constitute an LRRCT 2 domain. 2 disulfides stabilise this stretch: Cys755–Cys781 and Cys757–Cys799. Residues 808-828 (ALAVVIALTGLLAGFTAALYY) form a helical membrane-spanning segment. Topologically, residues 829–1097 (KFQTEIKIWL…INTNAKQSDV (269 aa)) are cytoplasmic. Residues 857-993 (KKFDAFISYS…WFWDKLRFAL (137 aa)) enclose the TIR domain.

Belongs to the Toll-like receptor family. In the absence of ligand, forms a low-affinity disulfide-linked homodimer. In the presence of ligand, crystal structures show one Tl molecule bound to a spaetzle C-106 homodimer. However, the active complex probably consists of two Tl molecules bound to a spaetzle C-106 homodimer. This is supported by in vitro experiments which also show binding of the spaetzle C-106 dimer to 2 Tl receptors. Ligand binding induces conformational changes in the extracellular domain of Tl. This may enable a secondary homodimerization interface at the C-terminus of the Tl extracellular domain. In early embryos, concentrated in the pseudocleavage furrows that form transiently between nuclei before cellularization and in the cleavage furrows during cellularization (at protein level). Later, found on cells in the mesectoderm, stomodeum, proctodeum, anterior and posterior midguts, splanchnopleura, salivary gland placode and adjacent to the segmentally repeated tracheal placodes (at protein level). During and after germ band shortening, localized in a number of cell types, including the salivary gland, foregut, hindgut, Malpighian tubules and epidermis (at protein level). In embryos, high expression in M13 with comparatively low expression in M12.

The protein resides in the cell membrane. Its subcellular location is the cytoplasm. Receptor for the cleaved activated form of spz, spaetzle C-106. Binding to spaetzle C-106 activates the Toll signaling pathway and induces expression of the antifungal peptide drosomycin. Component of the extracellular signaling pathway that establishes dorsal-ventral polarity in the embryo. Promotes heterophilic cellular adhesion. Involved in synaptic targeting of motoneurons RP5 and V to muscle 12 (M12); functions as a repulsive cue inhibiting motoneuron synapse formation on muscle 13 (M13) to guide RP5 and V to the neighboring M12, where its expression is repressed by tey. May also function in embryonic neuronal survival and the synaptic targeting of SNa motoneurons. The polypeptide is Protein toll (Drosophila melanogaster (Fruit fly)).